A 618-amino-acid chain; its full sequence is Proline--tRNA ligase (618 aa).

It belongs to the class-II aminoacyl-tRNA synthetase family. ProS type 1 subfamily. In terms of assembly, homodimer.

The protein localises to the cytoplasm. It carries out the reaction tRNA(Pro) + L-proline + ATP = L-prolyl-tRNA(Pro) + AMP + diphosphate. Its function is as follows. Catalyzes the attachment of proline to tRNA(Pro) in a two-step reaction: proline is first activated by ATP to form Pro-AMP and then transferred to the acceptor end of tRNA(Pro). As ProRS can inadvertently accommodate and process non-cognate amino acids such as alanine and cysteine, to avoid such errors it has two additional distinct editing activities against alanine. One activity is designated as 'pretransfer' editing and involves the tRNA(Pro)-independent hydrolysis of activated Ala-AMP. The other activity is designated 'posttransfer' editing and involves deacylation of mischarged Ala-tRNA(Pro). The misacylated Cys-tRNA(Pro) is not edited by ProRS. This is Proline--tRNA ligase from Streptococcus pyogenes serotype M1.